Consider the following 842-residue polypeptide: DNA topoisomerase-like protein cin-4 (842 aa).

The segment covering 1–26 (MSEEDRNVFTSIDKKGGGSKQMDDLN) has biased composition (basic and acidic residues). The disordered stretch occupies residues 1-50 (MSEEDRNVFTSIDKKGGGSKQMDDLNQKCPKRKTSKLKGIPKLEDANDAG). In terms of domain architecture, Topo IIA-type catalytic spans 314 to 783 (IPCLVDGLKP…TWQDLWITDL (470 aa)).

This sequence belongs to the type II topoisomerase family.

In terms of biological role, plays a role in the removal of cohesin from kinetochores on mitotic chromosomes and is required for centromere resolution. The polypeptide is DNA topoisomerase-like protein cin-4 (Caenorhabditis elegans).